Reading from the N-terminus, the 506-residue chain is Cytochrome P450 6a2 (506 aa).

Cysteine 451 serves as a coordination point for heme.

This sequence belongs to the cytochrome P450 family. Heme serves as cofactor.

Its subcellular location is the endoplasmic reticulum membrane. The protein resides in the microsome membrane. Functionally, is involved in the breakdown of synthetic insecticides and may be involved in the metabolism of insect hormones. The protein is Cytochrome P450 6a2 (Cyp6a2) of Drosophila melanogaster (Fruit fly).